Here is a 213-residue protein sequence, read N- to C-terminus: Transmembrane emp24 domain-containing protein p24delta8 (213 aa).

The N-terminal stretch at 1 to 22 (MDLCRSSILLLIIALLSPRTLS) is a signal peptide. Residues 23–180 (MRYELKSSKT…QELNRSTNSK (158 aa)) are Lumenal-facing. The 117-residue stretch at 32–148 (TKCIGEEIHE…VDMMEYQVKT (117 aa)) folds into the GOLD domain. Residue Asn97 is glycosylated (N-linked (GlcNAc...) asparagine). Residues 163–176 (LREREEEMQELNRS) adopt a coiled-coil conformation. An Omega-N-methylated arginine modification is found at Arg166. Residue Asn174 is glycosylated (N-linked (GlcNAc...) asparagine). The helical transmembrane segment at 181–203 (MAWLSFGSLVVCLSVAGLQFWHL) threads the bilayer. The interaction with ARF1 stretch occupies residues 202 to 213 (HLKTFFEKKKLI). Topologically, residues 204-213 (KTFFEKKKLI) are cytoplasmic. The short motif at 206–207 (FF) is the COPII vesicle coat-binding element. The COPI vesicle coat-binding signature appears at 206–213 (FFEKKKLI).

Belongs to the EMP24/GP25L family. Probably oligomerizes with other members of the EMP24/GP25L family. Associates with the COPI vesicle coat (coatomer). Associates with the COPII vesicle coat (coatomer). Interacts with ARF1 (GDP-bound).

The protein localises to the endoplasmic reticulum membrane. The protein resides in the golgi apparatus. It localises to the cis-Golgi network membrane. It is found in the golgi stack membrane. Functionally, involved in vesicular protein trafficking. Mainly functions in the early secretory pathway. Thought to act as cargo receptor at the lumenal side for incorporation of secretory cargo molecules into transport vesicles and to be involved in vesicle coat formation at the cytoplasmic side. On Golgi membranes, acts as a primary receptor for ARF1-GDP which is involved in COPI-vesicle formation. The chain is Transmembrane emp24 domain-containing protein p24delta8 from Arabidopsis thaliana (Mouse-ear cress).